A 181-amino-acid chain; its full sequence is Bifunctional protein PyrR (181 aa).

A PRPP-binding motif is present at residues 101–113; that stretch reads VILVDDVLFTGRT.

The protein belongs to the purine/pyrimidine phosphoribosyltransferase family. PyrR subfamily.

It carries out the reaction UMP + diphosphate = 5-phospho-alpha-D-ribose 1-diphosphate + uracil. Its function is as follows. Regulates the transcription of the pyrimidine nucleotide (pyr) operon in response to exogenous pyrimidines. Functionally, also displays a weak uracil phosphoribosyltransferase activity which is not physiologically significant. The polypeptide is Bifunctional protein PyrR (Desulfosudis oleivorans (strain DSM 6200 / JCM 39069 / Hxd3) (Desulfococcus oleovorans)).